Consider the following 270-residue polypeptide: Mediator of RNA polymerase II transcription subunit 4 (270 aa).

Positions 1–25 are disordered; that stretch reads MAAASSGEKEKERPGGGLGAAGGNS. Residue Ala2 is modified to N-acetylalanine. Coiled coils occupy residues 24–48 and 90–131; these read NSTRERLLSALEDLEVLSRELIEML and HHEM…AKEK. Phosphoserine is present on Ser32. The segment at 231 to 270 is disordered; that stretch reads MLPPNHSHDFLLEPPGHNKENEDDVEVMSTDSSSSSSDSD. Positions 236–250 are enriched in basic and acidic residues; sequence HSHDFLLEPPGHNKE. Positions 259-270 are enriched in low complexity; that stretch reads STDSSSSSSDSD.

The protein belongs to the Mediator complex subunit 4 family. As to quaternary structure, component of the Mediator complex, which is composed of MED1, MED4, MED6, MED7, MED8, MED9, MED10, MED11, MED12, MED13, MED13L, MED14, MED15, MED16, MED17, MED18, MED19, MED20, MED21, MED22, MED23, MED24, MED25, MED26, MED27, MED29, MED30, MED31, CCNC, CDK8 and CDC2L6/CDK11. The MED12, MED13, CCNC and CDK8 subunits form a distinct module termed the CDK8 module. Mediator containing the CDK8 module is less active than Mediator lacking this module in supporting transcriptional activation. Individual preparations of the Mediator complex lacking one or more distinct subunits have been variously termed ARC, CRSP, DRIP, PC2, SMCC and TRAP.

It localises to the nucleus. Functionally, component of the Mediator complex, a coactivator involved in the regulated transcription of nearly all RNA polymerase II-dependent genes. Mediator functions as a bridge to convey information from gene-specific regulatory proteins to the basal RNA polymerase II transcription machinery. Mediator is recruited to promoters by direct interactions with regulatory proteins and serves as a scaffold for the assembly of a functional preinitiation complex with RNA polymerase II and the general transcription factors. The protein is Mediator of RNA polymerase II transcription subunit 4 (MED4) of Bos taurus (Bovine).